The primary structure comprises 236 residues: Leucyl/phenylalanyl-tRNA--protein transferase (236 aa).

It belongs to the L/F-transferase family.

It localises to the cytoplasm. It carries out the reaction N-terminal L-lysyl-[protein] + L-leucyl-tRNA(Leu) = N-terminal L-leucyl-L-lysyl-[protein] + tRNA(Leu) + H(+). It catalyses the reaction N-terminal L-arginyl-[protein] + L-leucyl-tRNA(Leu) = N-terminal L-leucyl-L-arginyl-[protein] + tRNA(Leu) + H(+). The catalysed reaction is L-phenylalanyl-tRNA(Phe) + an N-terminal L-alpha-aminoacyl-[protein] = an N-terminal L-phenylalanyl-L-alpha-aminoacyl-[protein] + tRNA(Phe). Functions in the N-end rule pathway of protein degradation where it conjugates Leu, Phe and, less efficiently, Met from aminoacyl-tRNAs to the N-termini of proteins containing an N-terminal arginine or lysine. This chain is Leucyl/phenylalanyl-tRNA--protein transferase, found in Yersinia enterocolitica serotype O:8 / biotype 1B (strain NCTC 13174 / 8081).